Consider the following 91-residue polypeptide: Small ribosomal subunit protein uS15 (91 aa).

This sequence belongs to the universal ribosomal protein uS15 family. In terms of assembly, part of the 30S ribosomal subunit. Forms a bridge to the 50S subunit in the 70S ribosome, contacting the 23S rRNA.

Functionally, one of the primary rRNA binding proteins, it binds directly to 16S rRNA where it helps nucleate assembly of the platform of the 30S subunit by binding and bridging several RNA helices of the 16S rRNA. Forms an intersubunit bridge (bridge B4) with the 23S rRNA of the 50S subunit in the ribosome. This Synechococcus sp. (strain JA-3-3Ab) (Cyanobacteria bacterium Yellowstone A-Prime) protein is Small ribosomal subunit protein uS15.